Here is a 1169-residue protein sequence, read N- to C-terminus: Zinc finger protein 862 (1169 aa).

Residues V11–E77 form the KRAB 1 domain. The segment at K135 to R218 adopts a TTF-type 1 zinc-finger fold. In terms of domain architecture, KRAB 2 spans V333–G404. Residues R461–V544 form a TTF-type 2 zinc finger.

It localises to the nucleus. May be involved in transcriptional regulation. This Homo sapiens (Human) protein is Zinc finger protein 862 (ZNF862).